The following is a 434-amino-acid chain: Alpha-enolase (434 aa).

Ser40 serves as a coordination point for Mg(2+). Substrate contacts are provided by His158 and Glu167. Glu210 acts as the Proton donor in catalysis. Positions 245, 293, and 318 each coordinate Mg(2+). The substrate site is built by Glu293 and Asp318. Residue Lys343 is the Proton acceptor of the active site. Substrate-binding positions include 370-373 and Lys394; that span reads SHRS.

Belongs to the enolase family. Homodimer. The cofactor is Mg(2+).

The protein localises to the cytoplasm. The catalysed reaction is (2R)-2-phosphoglycerate = phosphoenolpyruvate + H2O. Its pathway is carbohydrate degradation; glycolysis; pyruvate from D-glyceraldehyde 3-phosphate: step 4/5. This Gallus gallus (Chicken) protein is Alpha-enolase (ENO1).